We begin with the raw amino-acid sequence, 875 residues long: Neurotrypsin (875 aa).

The signal sequence occupies residues 1–20 (MTLARFVLALVLGALPEVVX). N26 carries N-linked (GlcNAc...) asparagine glycosylation. Residues 31–88 (HRPRHSPPTGPHYPYYLPTQQRPPRTRPPPPLPRFPRPPRALPAQRPHALQAGHTPRP) form a disordered region. Residues 56–71 (TRPPPPLPRFPRPPRA) show a composition bias toward pro residues. The Kringle domain occupies 93-165 (CPAGEPWVSV…GKVDWGYCDC (73 aa)). 20 cysteine pairs are disulfide-bonded: C93/C165, C109/C149, C138/C163, C195/C259, C208/C269, C239/C249, C305/C369, C318/C379, C349/C359, C412/C475, C425/C485, C455/C465, C525/C589, C538/C599, C569/C579, C619/C750, C661/C677, C765/C831, C794/C808, and C821/C850. SRCR domains are found at residues 170–271 (IRLR…TCSF), 280–381 (IRLV…SCTP), 387–487 (IRLA…ACYP), and 500–601 (VRLM…ICDY). Residues 619–630 (CGLRLLHRRQKR) form a zymogen activation region region. The Peptidase S1 domain maps to 631-874 (IIGGKNSLRG…FVPWIKSVTK (244 aa)). The Charge relay system role is filled by H676. Residue N683 is glycosylated (N-linked (GlcNAc...) asparagine). Residue D726 is the Charge relay system of the active site. S825 (charge relay system) is an active-site residue.

Belongs to the peptidase S1 family.

It is found in the secreted. Plays a role in neuronal plasticity and the proteolytic action may subserve structural reorganizations associated with learning and memory operations. The chain is Neurotrypsin (PRSS12) from Nomascus leucogenys (Northern white-cheeked gibbon).